The sequence spans 371 residues: Methylthioribose-1-phosphate isomerase (371 aa).

Residues 53–55, R90, and Q203 each bind substrate; that span reads RGA. D243 serves as the catalytic Proton donor. 253–254 contacts substrate; it reads NK.

Belongs to the eIF-2B alpha/beta/delta subunits family. MtnA subfamily.

It catalyses the reaction 5-(methylsulfanyl)-alpha-D-ribose 1-phosphate = 5-(methylsulfanyl)-D-ribulose 1-phosphate. It carries out the reaction 5-deoxy-alpha-D-ribose 1-phosphate = 5-deoxy-D-ribulose 1-phosphate. It participates in amino-acid biosynthesis; L-methionine biosynthesis via salvage pathway; L-methionine from S-methyl-5-thio-alpha-D-ribose 1-phosphate: step 1/6. In terms of biological role, catalyzes the interconversion of methylthioribose-1-phosphate (MTR-1-P) into methylthioribulose-1-phosphate (MTRu-1-P). Also catalyzes the interconversion of 5-deoxyribose 1-phosphate and 5-deoxyribulose 1-phosphate. Part of a bifunctional DHAP-shunt salvage pathway for SAM by-products. In Escherichia coli O45:K1 (strain S88 / ExPEC), this protein is Methylthioribose-1-phosphate isomerase.